Consider the following 98-residue polypeptide: Histone H4-like protein type G (98 aa).

The DNA-binding element occupies 17 to 21; that stretch reads KCHRK.

Belongs to the histone H4 family. In terms of assembly, the nucleosome is a histone octamer containing two molecules each of H2A, H2B, H3 and H4 assembled in one H3-H4 heterotetramer and two H2A-H2B heterodimers. The octamer wraps approximately 147 bp of DNA.

The protein resides in the nucleus. It is found in the chromosome. In terms of biological role, core component of nucleosome. Nucleosomes wrap and compact DNA into chromatin, limiting DNA accessibility to the cellular machineries which require DNA as a template. Histones thereby play a central role in transcription regulation, DNA repair, DNA replication and chromosomal stability. DNA accessibility is regulated via a complex set of post-translational modifications of histones, also called histone code, and nucleosome remodeling. The chain is Histone H4-like protein type G from Homo sapiens (Human).